A 367-amino-acid chain; its full sequence is 1-deoxy-D-xylulose 5-phosphate reductoisomerase (367 aa).

Residues threonine 10, glycine 11, serine 12, isoleucine 13, glycine 34, lysine 35, asparagine 36, and asparagine 112 each contribute to the NADPH site. Lysine 113 provides a ligand contact to 1-deoxy-D-xylulose 5-phosphate. An NADPH-binding site is contributed by glutamate 114. Aspartate 138 is a Mn(2+) binding site. Serine 139, glutamate 140, serine 164, and histidine 186 together coordinate 1-deoxy-D-xylulose 5-phosphate. Mn(2+) is bound at residue glutamate 140. Position 192 (glycine 192) interacts with NADPH. Serine 199, asparagine 204, lysine 205, and glutamate 208 together coordinate 1-deoxy-D-xylulose 5-phosphate. Glutamate 208 provides a ligand contact to Mn(2+).

Belongs to the DXR family. Requires Mg(2+) as cofactor. Mn(2+) is required as a cofactor.

It catalyses the reaction 2-C-methyl-D-erythritol 4-phosphate + NADP(+) = 1-deoxy-D-xylulose 5-phosphate + NADPH + H(+). Its pathway is isoprenoid biosynthesis; isopentenyl diphosphate biosynthesis via DXP pathway; isopentenyl diphosphate from 1-deoxy-D-xylulose 5-phosphate: step 1/6. Catalyzes the NADPH-dependent rearrangement and reduction of 1-deoxy-D-xylulose-5-phosphate (DXP) to 2-C-methyl-D-erythritol 4-phosphate (MEP). The polypeptide is 1-deoxy-D-xylulose 5-phosphate reductoisomerase (Thermus thermophilus (strain ATCC BAA-163 / DSM 7039 / HB27)).